The following is a 579-amino-acid chain: Carotenoid-cleaving dioxygenase, mitochondrial (579 aa).

His-226, His-286, His-357, and His-573 together coordinate Fe cation.

This sequence belongs to the carotenoid oxygenase family. It depends on Fe(2+) as a cofactor. In terms of tissue distribution, highly expressed in retinal pigment epithelium. Also expressed in stomach, small intestine, liver, testis, kidney, adrenal gland, pancreas, heart, skeletal muscle and prostate (at protein level).

Its subcellular location is the mitochondrion. The catalysed reaction is all-trans-beta-carotene + O2 = beta-ionone + all-trans-10'-apo-beta-carotenal. It catalyses the reaction 5-cis-lycopene + O2 = 5-cis-10'-apo-lycopenal + (3E,5E)-6,10-dimethylundeca-3,5,9-trien-2-one. It carries out the reaction 13-cis-lycopene + O2 = 13-cis-10'-apo-lycopenal + (3E,5E)-6,10-dimethylundeca-3,5,9-trien-2-one. The enzyme catalyses lutein + O2 = (3R,6R)-hydroxy-alpha-ionone + (3R)-3-hydroxy-10'-apo-beta-carotenal. The catalysed reaction is lutein + O2 = (3R,6R)-3-hydroxy-10'-apo-alpha-carotenal + (3R)-hydroxy-beta-ionone. It catalyses the reaction all-trans-zeaxanthin + 2 O2 = 4,9-dimethyldodeca-2,4,6,8,10-pentaenedial + 2 (3R)-hydroxy-beta-ionone. It carries out the reaction all-trans-zeaxanthin + O2 = (3R)-3-hydroxy-10'-apo-beta-carotenal + (3R)-hydroxy-beta-ionone. The enzyme catalyses beta-cryptoxanthin + O2 = all-trans-10'-apo-beta-carotenal + (3R)-hydroxy-beta-ionone. The catalysed reaction is all-trans-10'-apo-beta-carotenal + O2 = beta-ionone + 4,9-dimethyldodeca-2,4,6,8,10-pentaenedial. It catalyses the reaction (3R)-3-hydroxy-10'-apo-beta-carotenal + O2 = 4,9-dimethyldodeca-2,4,6,8,10-pentaenedial + (3R)-hydroxy-beta-ionone. It carries out the reaction (3R,6R)-3-hydroxy-10'-apo-alpha-carotenal + O2 = (3R,6R)-hydroxy-alpha-ionone + 4,9-dimethyldodeca-2,4,6,8,10-pentaenedial. Functionally, broad specificity mitochondrial dioxygenase that mediates the asymmetric oxidative cleavage of carotenoids. Cleaves carotenes (pure hydrocarbon carotenoids) such as all-trans-beta-carotene and lycopene as well as xanthophylls (oxygenated carotenoids) such as zeaxanthin, lutein and beta-cryptoxanthin at both the 9,10 and the 9',10' carbon-carbon double bond. Through its function in carotenoids metabolism regulates oxidative stress and the production of important signaling molecules. This Homo sapiens (Human) protein is Carotenoid-cleaving dioxygenase, mitochondrial.